A 546-amino-acid chain; its full sequence is uncharacterized protein (546 aa).

Transmembrane regions (helical) follow at residues 27 to 46 (EALV…PFVF), 59 to 78 (NGLI…ALVT), 83 to 100 (FALI…YAIL), 114 to 134 (SVLF…AYAA), 143 to 163 (PLII…IPIF), 176 to 196 (MLYS…ALGI), 204 to 224 (VIAV…VFTA), 237 to 257 (LSSA…FGVF), and 268 to 288 (MIWI…LIGW).

It is found in the cell membrane. This is an uncharacterized protein from Bacillus subtilis (strain 168).